Reading from the N-terminus, the 406-residue chain is Multifunctional CCA protein (406 aa).

2 residues coordinate ATP: Gly8 and Arg11. CTP contacts are provided by Gly8 and Arg11. Mg(2+) is bound by residues Asp21 and Asp23. ATP-binding residues include Arg91, Arg138, and Arg141. CTP is bound by residues Arg91, Arg138, and Arg141. One can recognise an HD domain in the interval 229 to 331 (TGIHQEMVSD…LELLGRCDAL (103 aa)).

This sequence belongs to the tRNA nucleotidyltransferase/poly(A) polymerase family. Bacterial CCA-adding enzyme type 1 subfamily. Monomer. Can also form homodimers and oligomers. Mg(2+) serves as cofactor. The cofactor is Ni(2+).

It carries out the reaction a tRNA precursor + 2 CTP + ATP = a tRNA with a 3' CCA end + 3 diphosphate. The enzyme catalyses a tRNA with a 3' CCA end + 2 CTP + ATP = a tRNA with a 3' CCACCA end + 3 diphosphate. In terms of biological role, catalyzes the addition and repair of the essential 3'-terminal CCA sequence in tRNAs without using a nucleic acid template. Adds these three nucleotides in the order of C, C, and A to the tRNA nucleotide-73, using CTP and ATP as substrates and producing inorganic pyrophosphate. tRNA 3'-terminal CCA addition is required both for tRNA processing and repair. Also involved in tRNA surveillance by mediating tandem CCA addition to generate a CCACCA at the 3' terminus of unstable tRNAs. While stable tRNAs receive only 3'-terminal CCA, unstable tRNAs are marked with CCACCA and rapidly degraded. In Stenotrophomonas maltophilia (strain R551-3), this protein is Multifunctional CCA protein.